The sequence spans 269 residues: Indole-3-glycerol phosphate synthase (269 aa).

Belongs to the TrpC family.

It catalyses the reaction 1-(2-carboxyphenylamino)-1-deoxy-D-ribulose 5-phosphate + H(+) = (1S,2R)-1-C-(indol-3-yl)glycerol 3-phosphate + CO2 + H2O. It functions in the pathway amino-acid biosynthesis; L-tryptophan biosynthesis; L-tryptophan from chorismate: step 4/5. The chain is Indole-3-glycerol phosphate synthase from Roseiflexus sp. (strain RS-1).